A 292-amino-acid chain; its full sequence is Coatomer subunit epsilon (292 aa).

The protein belongs to the COPE family. As to quaternary structure, oligomeric complex that consists of at least the alpha, beta, beta', gamma, delta, epsilon and zeta subunits.

It is found in the cytoplasm. Its subcellular location is the golgi apparatus membrane. It localises to the cytoplasmic vesicle. The protein localises to the COPI-coated vesicle membrane. Its function is as follows. The coatomer is a cytosolic protein complex that binds to dilysine motifs and reversibly associates with Golgi non-clathrin-coated vesicles, which further mediate biosynthetic protein transport from the ER, via the Golgi up to the trans Golgi network. The coatomer complex is required for budding from Golgi membranes, and is essential for the retrograde Golgi-to-ER transport of dilysine-tagged proteins. The sequence is that of Coatomer subunit epsilon (cope-1) from Caenorhabditis elegans.